Reading from the N-terminus, the 431-residue chain is Lipid storage droplets surface-binding protein 1 (431 aa).

The tract at residues 397 to 431 (KVTGSDGGNSNHRSSRRRQDPNHYSATHNNINGVY) is disordered. Residues 418–431 (NHYSATHNNINGVY) are compositionally biased toward polar residues.

Belongs to the perilipin family.

The protein resides in the cytoplasm. The protein localises to the lipid droplet. Required for normal deposition of neutral lipids in the oocyte. The polypeptide is Lipid storage droplets surface-binding protein 1 (Drosophila melanogaster (Fruit fly)).